We begin with the raw amino-acid sequence, 303 residues long: UDP-3-O-acyl-N-acetylglucosamine deacetylase (303 aa).

Residues histidine 78, histidine 237, and aspartate 241 each coordinate Zn(2+). The Proton donor role is filled by histidine 264.

Belongs to the LpxC family. It depends on Zn(2+) as a cofactor.

The catalysed reaction is a UDP-3-O-[(3R)-3-hydroxyacyl]-N-acetyl-alpha-D-glucosamine + H2O = a UDP-3-O-[(3R)-3-hydroxyacyl]-alpha-D-glucosamine + acetate. It participates in glycolipid biosynthesis; lipid IV(A) biosynthesis; lipid IV(A) from (3R)-3-hydroxytetradecanoyl-[acyl-carrier-protein] and UDP-N-acetyl-alpha-D-glucosamine: step 2/6. In terms of biological role, catalyzes the hydrolysis of UDP-3-O-myristoyl-N-acetylglucosamine to form UDP-3-O-myristoylglucosamine and acetate, the committed step in lipid A biosynthesis. In Xanthomonas oryzae pv. oryzae (strain MAFF 311018), this protein is UDP-3-O-acyl-N-acetylglucosamine deacetylase.